Here is a 260-residue protein sequence, read N- to C-terminus: POLG alternative reading frame (260 aa).

Disordered regions lie at residues 1–50 (MEPK…LRPR) and 108–219 (ARRG…RRGG). Composition is skewed to low complexity over residues 36–48 (AGSS…LQLR), 116–154 (GRGA…GQPG), and 164–186 (AEPA…EAPG). The interval 104 to 130 (ANLRARRGDAWRGRGAPQRRAPAEARA) is required for nucleolar localization. 2 stretches are compositionally biased toward gly residues: residues 187–199 (LGLG…VRPR) and 209–219 (RGAGPGVRRGG).

Interacts with C1QBP; the interaction results in nucleolar localization of C1QBP, probably due to prevention of C1QBP maturation and redirection from mitochondria to nucleoli. Post-translationally, undergoes proteolytic cleavage to produce a secreted C-terminal fragment.

The protein localises to the nucleus. It is found in the nucleolus. Its subcellular location is the secreted. The sequence is that of POLG alternative reading frame from Homo sapiens (Human).